The following is a 142-amino-acid chain: Large ribosomal subunit protein uL11 (142 aa).

It belongs to the universal ribosomal protein uL11 family. In terms of assembly, part of the ribosomal stalk of the 50S ribosomal subunit. Interacts with L10 and the large rRNA to form the base of the stalk. L10 forms an elongated spine to which L12 dimers bind in a sequential fashion forming a multimeric L10(L12)X complex. In terms of processing, one or more lysine residues are methylated.

Functionally, forms part of the ribosomal stalk which helps the ribosome interact with GTP-bound translation factors. In Mesorhizobium japonicum (strain LMG 29417 / CECT 9101 / MAFF 303099) (Mesorhizobium loti (strain MAFF 303099)), this protein is Large ribosomal subunit protein uL11.